The sequence spans 701 residues: Pseudouridylate synthase PUS7L (701 aa).

S79 is modified (phosphoserine). Catalysis depends on D339, which acts as the Nucleophile. The 224-residue stretch at 424 to 647 folds into the TRUD domain; the sequence is GFVNYYGPQR…PGCYRQILKH (224 aa).

It belongs to the pseudouridine synthase TruD family.

It catalyses the reaction a uridine in mRNA = a pseudouridine in mRNA. Functionally, pseudouridine synthase that catalyzes pseudouridylation of mRNAs. This is Pseudouridylate synthase PUS7L from Homo sapiens (Human).